The sequence spans 636 residues: Chaperone protein HtpG (636 aa).

The tract at residues 1 to 342 (MSSETLEFQA…AHDLSLNISR (342 aa)) is a; substrate-binding. The interval 343-558 (ELLQQDRQIQ…AHDVTPTLEK (216 aa)) is b. Residues 559–636 (MYRAMGHEVP…ILAERLARTL (78 aa)) are c.

This sequence belongs to the heat shock protein 90 family. In terms of assembly, homodimer.

It localises to the cytoplasm. In terms of biological role, molecular chaperone. Has ATPase activity. In Salinispora tropica (strain ATCC BAA-916 / DSM 44818 / JCM 13857 / NBRC 105044 / CNB-440), this protein is Chaperone protein HtpG.